The primary structure comprises 453 residues: Chromosomal replication initiator protein DnaA (453 aa).

Residues 1-71 form a domain I, interacts with DnaA modulators region; sequence MSEKEIWEKV…QAILFDVVGY (71 aa). A domain II region spans residues 71 to 114; that stretch reads YEVKPHFITTEELANYSNNETATPKEATKPSTETTEDNHVLGRE. The domain III, AAA+ region stretch occupies residues 115–331; the sequence is QFNAHNTFDT…GALTRLLAYS (217 aa). ATP is bound by residues G159, G161, K162, and T163. Residues 332 to 453 are domain IV, binds dsDNA; that stretch reads QLLGKPITTE…ENLEKEIRNV (122 aa).

Belongs to the DnaA family. Oligomerizes as a right-handed, spiral filament on DNA at oriC.

It is found in the cytoplasm. Plays an essential role in the initiation and regulation of chromosomal replication. ATP-DnaA binds to the origin of replication (oriC) to initiate formation of the DNA replication initiation complex once per cell cycle. Binds the DnaA box (a 9 base pair repeat at the origin) and separates the double-stranded (ds)DNA. Forms a right-handed helical filament on oriC DNA; dsDNA binds to the exterior of the filament while single-stranded (ss)DNA is stabiized in the filament's interior. The ATP-DnaA-oriC complex binds and stabilizes one strand of the AT-rich DNA unwinding element (DUE), permitting loading of DNA polymerase. After initiation quickly degrades to an ADP-DnaA complex that is not apt for DNA replication. Binds acidic phospholipids. In Staphylococcus aureus (strain MRSA252), this protein is Chromosomal replication initiator protein DnaA.